An 816-amino-acid polypeptide reads, in one-letter code: Endo-acting ulvan lyase (816 aa).

Positions 1–23 (MGTSVRRISVVLMMLFGTNFCWS) are cleaved as a signal peptide.

Belongs to the polysaccharide lyase family.

The protein resides in the cell surface. The protein localises to the periplasm. Functionally, ulvan lyase involved in ulvan degradation. Ulvan is the main polysaccharide component of the Ulvales (green seaweed) cell wall. It is composed of disaccharide building blocks comprising 3-sulfated rhamnose (Rha3S) linked to D-glucuronic acid (GlcA), L-iduronic acid (IduA), or D-xylose (Xyl). Ulvan lyase catalyzes the endolytic cleavage of the glycosidic bond between Rha3S and the uronic acids GlcA or IduA, producing oligosaccharides that have unsaturated 4-deoxy-L-threo-hex-4-enopyranosiduronic acid (deltaUA) at the non-reducing end. This results eventually in the degradation of the ulvan polysaccharide into deltaUA-Rha3S disaccharides and deltaUA-Rha3S-Xyl-Rha3S tetrasaccharides. This Formosa agariphila (strain DSM 15362 / KCTC 12365 / LMG 23005 / KMM 3901 / M-2Alg 35-1) protein is Endo-acting ulvan lyase.